The chain runs to 157 residues: Protein Smg homolog (157 aa).

Belongs to the Smg family.

The sequence is that of Protein Smg homolog from Shewanella denitrificans (strain OS217 / ATCC BAA-1090 / DSM 15013).